Reading from the N-terminus, the 214-residue chain is Exosome complex component RRP46 homolog (214 aa).

This sequence belongs to the RNase PH family. In terms of assembly, homodimer. Component of the RNA exosome complex. Interacts with crn-4; interaction promotes the DNase activity of crn-4. Interacts with crn-3, cps-6 and cyn-13.

It localises to the cytoplasm. Its subcellular location is the nucleus. Functionally, non-catalytic component of the RNA exosome complex which has 3'-&gt;5' exoribonuclease activity and participates in a multitude of cellular RNA processing and degradation events. Involved in apoptotic DNA degradation. In vitro, does not bind or digest single-stranded RNA. In vitro, binds to double-stranded DNA without detectable DNase activity. The polypeptide is Exosome complex component RRP46 homolog (Caenorhabditis elegans).